Here is a 175-residue protein sequence, read N- to C-terminus: Disulfide bond formation protein B 2 (175 aa).

The Cytoplasmic segment spans residues methionine 1–leucine 9. A helical transmembrane segment spans residues phenylalanine 10–tyrosine 26. Residues leucine 27–alanine 44 lie on the Periplasmic side of the membrane. A disulfide bond links cysteine 36 and cysteine 39. Residues alanine 45–proline 61 traverse the membrane as a helical segment. At glycine 62–arginine 68 the chain is on the cytoplasmic side. A helical membrane pass occupies residues tyrosine 69–glycine 85. The Periplasmic segment spans residues alanine 86 to glutamate 142. Residues tryptophan 143–serine 161 traverse the membrane as a helical segment. The Cytoplasmic segment spans residues glutamate 162 to tyrosine 175.

The protein belongs to the DsbB family.

It localises to the cell inner membrane. Required for disulfide bond formation in some periplasmic proteins. Acts by oxidizing the DsbA protein. This Pseudomonas savastanoi pv. phaseolicola (strain 1448A / Race 6) (Pseudomonas syringae pv. phaseolicola (strain 1448A / Race 6)) protein is Disulfide bond formation protein B 2.